The sequence spans 428 residues: Enolase (428 aa).

Residue Gln164 participates in (2R)-2-phosphoglycerate binding. Glu208 acts as the Proton donor in catalysis. The Mg(2+) site is built by Asp245, Glu286, and Asp313. Positions 338, 367, 368, and 389 each coordinate (2R)-2-phosphoglycerate. The active-site Proton acceptor is the Lys338.

Belongs to the enolase family. Mg(2+) is required as a cofactor.

Its subcellular location is the cytoplasm. It localises to the secreted. It is found in the cell surface. The enzyme catalyses (2R)-2-phosphoglycerate = phosphoenolpyruvate + H2O. It functions in the pathway carbohydrate degradation; glycolysis; pyruvate from D-glyceraldehyde 3-phosphate: step 4/5. Functionally, catalyzes the reversible conversion of 2-phosphoglycerate (2-PG) into phosphoenolpyruvate (PEP). It is essential for the degradation of carbohydrates via glycolysis. This chain is Enolase, found in Pyrococcus abyssi (strain GE5 / Orsay).